The following is a 328-amino-acid chain: Reticulocalbin-3 (328 aa).

An N-terminal signal peptide occupies residues 1-20 (MMWRWTLMLLLLLLRHWALG). The segment at 24–48 (PDAGPHGQDRVHHGTPLSEAPHDDA) is disordered. 6 consecutive EF-hand domains span residues 75–112 (ESQARLGRIVDRMDLAGDSDGWVSLAELRAWIAHTQQR), 113–148 (HIRDSVSAAWHTYDTDRDGRVGWEELRNATYGHYEP), 163–198 (KMLARDERRFRVADQDGDSMATREELTAFLHPEEFP), 200–235 (MRDIVVAETLEDLDKNKDGYVQVEEYIADLYSAEPG), 241–276 (WVQTERQQFRDFRDLNKDGRLDGSEVGYWVLPPSQD), and 277–312 (QPLVEANHLLHESDTDKDGRLSKAEILSNWNMFVGS). Residues D92, D94, W96, E101, D126, D128, D130, R132, and E137 each contribute to the Ca(2+) site. N140 carries an N-linked (GlcNAc...) asparagine glycan. Residues D176, D178, D180, M182, E187, D213, N215, D217, Y219, E224, D254, N256, D258, R260, E265, D290, D292, D294, R296, and E301 each coordinate Ca(2+). Residues 325-328 (HDEL) carry the Prevents secretion from ER motif.

Belongs to the CREC family. As to quaternary structure, interacts with PCSK6 (immature form including the propeptide); probably involved in the maturation and the secretion of PCSK6. N-glycosylated. In terms of processing, degraded by PCSK6 and other endoproteases including FURIN and PCSK5.

The protein localises to the endoplasmic reticulum lumen. Its function is as follows. Probable molecular chaperone assisting protein biosynthesis and transport in the endoplasmic reticulum. Required for the proper biosynthesis and transport of pulmonary surfactant-associated protein A/SP-A, pulmonary surfactant-associated protein D/SP-D and the lipid transporter ABCA3. By regulating both the proper expression and the degradation through the endoplasmic reticulum-associated protein degradation pathway of these proteins plays a crucial role in pulmonary surfactant homeostasis. Has an anti-fibrotic activity by negatively regulating the secretion of type I and type III collagens. This calcium-binding protein also transiently associates with immature PCSK6 and regulates its secretion. The polypeptide is Reticulocalbin-3 (Rattus norvegicus (Rat)).